A 148-amino-acid polypeptide reads, in one-letter code: Lipid droplet organization protein LDO16 (148 aa).

Residues 1–7 (MVSTATF) lie on the Cytoplasmic side of the membrane. Residues 8–28 (FFFVYLTLFVVIGFFSSLFII) form a helical membrane-spanning segment. Position 29 (Pro29) is a topological domain, lumenal. A helical membrane pass occupies residues 30-50 (LLGISFVFAIGVVSFGFCSNM). The Cytoplasmic portion of the chain corresponds to 51–148 (SFKMAQLIYV…NKAGNKFQLS (98 aa)). The interval 83–110 (QEPQEPLSTLRPVSNPTIPSPLRQTARP) is disordered. Positions 93–109 (RPVSNPTIPSPLRQTAR) are enriched in polar residues. Ser102 carries the post-translational modification Phosphoserine.

The protein belongs to the OSW5 family. As to quaternary structure, interacts specifically with the seipin complex FLD1-LDB16. Only a fraction appears to associate with the seipin core components, suggesting that it may be an ancillary subunit of the complex. Found to interact with many mitochondrial and peroxisomal proteins.

The protein localises to the endoplasmic reticulum membrane. It localises to the lipid droplet. Functionally, involved in lipid droplet (LD) organization. Functions primarily upon nutrient depletion, facilitating LD consumption by lipophagy. Required for correct LD distribution during entry into stationary phase, where LDs accumulate at nucleus-vacuole junction (NVJ) contact sites. Involved in membrane interaction in a manner similar to those of SNARE proteins, binding to partners present in mitochondria or peroxisomes. Its partner on the mitochondrion side might be TOM22, a mitochondrial outer membrane protein, linking lipid droplets and mitochondria by protein-protein interaction. Involved in spore wall assembly. The polypeptide is Lipid droplet organization protein LDO16 (Saccharomyces cerevisiae (strain ATCC 204508 / S288c) (Baker's yeast)).